Reading from the N-terminus, the 269-residue chain is MSRLQNRFAELKAENRAALVTFVTAGDPDYATSLSILKGLPEAGADVIELGMPFTDPMADGPAIQLANIRALAGKQGMQQTLQMVREFRAGNQSTPLVLMGYYNPIFVYGVERFISDAKEAGVDGLIVVDLPPEHNDELCEPAQSAGLDFIRLTTPTTDDDRLPTVLAGSSGFVYYVSVAGVTGAGAATLDHVEEAVARLRRHTDLPVCIGFGIRTPEHAAEVAKRAEGAVVGSALIDKIAEAKSPQQAIDGVLGLCRELAEGVRGARR.

Active-site proton acceptor residues include Glu49 and Asp60.

Belongs to the TrpA family. In terms of assembly, tetramer of two alpha and two beta chains.

It carries out the reaction (1S,2R)-1-C-(indol-3-yl)glycerol 3-phosphate + L-serine = D-glyceraldehyde 3-phosphate + L-tryptophan + H2O. The protein operates within amino-acid biosynthesis; L-tryptophan biosynthesis; L-tryptophan from chorismate: step 5/5. In terms of biological role, the alpha subunit is responsible for the aldol cleavage of indoleglycerol phosphate to indole and glyceraldehyde 3-phosphate. In Ectopseudomonas mendocina (strain ymp) (Pseudomonas mendocina), this protein is Tryptophan synthase alpha chain.